A 266-amino-acid polypeptide reads, in one-letter code: Chymotrypsin-like elastase family member 1 (266 aa).

An N-terminal signal peptide occupies residues 1–16 (MLRFLVFATLVLYGHS). Positions 17–26 (TQDFPETNAR) are cleaved as a propeptide — activation peptide. The Peptidase S1 domain maps to 27 to 264 (VVGGTEAGRN…YISWINKTIA (238 aa)). The cysteines at positions 56 and 72 are disulfide-linked. The Charge relay system role is filled by H71. Ca(2+) contacts are provided by D85, N87, Q90, and E95. A glycan (N-linked (GlcNAc...) asparagine) is linked at N87. The active-site Charge relay system is D119. 3 disulfide bridges follow: C153/C220, C184/C200, and C210/C240. The active-site Charge relay system is S214. N241 and N260 each carry an N-linked (GlcNAc...) asparagine glycan.

This sequence belongs to the peptidase S1 family. Elastase subfamily. Ca(2+) is required as a cofactor.

It localises to the secreted. The catalysed reaction is Hydrolysis of proteins, including elastin. Preferential cleavage: Ala-|-Xaa.. Functionally, serine proteases that hydrolyze many proteins in addition to elastin. The protein is Chymotrypsin-like elastase family member 1 (CELA1) of Macaca fascicularis (Crab-eating macaque).